The following is a 495-amino-acid chain: UDP-glycosyltransferase 73C9 (495 aa).

23–26 lines the UDP-alpha-D-glucose pocket; the sequence is GHMI. His24 (proton acceptor) is an active-site residue. Asp129 serves as the catalytic Charge relay. UDP-alpha-D-glucose contacts are provided by residues 355 to 358, 373 to 381, and 397 to 398; these read WSPQ, HCGWNSTLE, and DQ.

This sequence belongs to the UDP-glycosyltransferase family.

Possesses very weak glucosyltransferase activity toward 2,4,5-trichlorophenol (TCP), when assayed with high concentrations of TCP. The sequence is that of UDP-glycosyltransferase 73C9 from Barbarea vulgaris (Yellow rocket).